Here is a 158-residue protein sequence, read N- to C-terminus: SsrA-binding protein (158 aa).

Belongs to the SmpB family.

The protein resides in the cytoplasm. Its function is as follows. Required for rescue of stalled ribosomes mediated by trans-translation. Binds to transfer-messenger RNA (tmRNA), required for stable association of tmRNA with ribosomes. tmRNA and SmpB together mimic tRNA shape, replacing the anticodon stem-loop with SmpB. tmRNA is encoded by the ssrA gene; the 2 termini fold to resemble tRNA(Ala) and it encodes a 'tag peptide', a short internal open reading frame. During trans-translation Ala-aminoacylated tmRNA acts like a tRNA, entering the A-site of stalled ribosomes, displacing the stalled mRNA. The ribosome then switches to translate the ORF on the tmRNA; the nascent peptide is terminated with the 'tag peptide' encoded by the tmRNA and targeted for degradation. The ribosome is freed to recommence translation, which seems to be the essential function of trans-translation. The polypeptide is SsrA-binding protein (Roseiflexus castenholzii (strain DSM 13941 / HLO8)).